The sequence spans 242 residues: tRNA (guanine-N(1)-)-methyltransferase (242 aa).

S-adenosyl-L-methionine contacts are provided by residues glycine 115 and 134–139 (LGDFVL). Over residues 210 to 224 (QEQREQRTAARRPDL) the composition is skewed to basic and acidic residues. The tract at residues 210-242 (QEQREQRTAARRPDLMQRWQQRFGADNDSEHRA) is disordered.

This sequence belongs to the RNA methyltransferase TrmD family. Homodimer.

Its subcellular location is the cytoplasm. The enzyme catalyses guanosine(37) in tRNA + S-adenosyl-L-methionine = N(1)-methylguanosine(37) in tRNA + S-adenosyl-L-homocysteine + H(+). In terms of biological role, specifically methylates guanosine-37 in various tRNAs. The protein is tRNA (guanine-N(1)-)-methyltransferase of Synechococcus sp. (strain WH7803).